Reading from the N-terminus, the 374-residue chain is DNA integrity scanning protein DisA (374 aa).

The DAC domain maps to 20 to 158; that stretch reads DGLMRASLSA…DGQRRVLEDS (139 aa). Residues Gly-87, Leu-105, and 118 to 122 each bind ATP; that span reads TRHRT.

This sequence belongs to the DisA family. Homooctamer. Interacts with RadA. Mg(2+) is required as a cofactor.

It catalyses the reaction 2 ATP = 3',3'-c-di-AMP + 2 diphosphate. Diadenylate cyclase activity is inhibited by the interaction with RadA. Participates in a DNA-damage check-point that is active prior to asymmetric division when DNA is damaged. DisA forms globular foci that rapidly scan along the chromosomes during sporulation, searching for lesions. When a lesion is present, DisA pauses at the lesion site. This triggers a cellular response that culminates in a temporary block in sporulation initiation. Functionally, also has diadenylate cyclase activity, catalyzing the condensation of 2 ATP molecules into cyclic di-AMP (c-di-AMP). c-di-AMP acts as a signaling molecule that couples DNA integrity with progression of sporulation. The rise in c-di-AMP level generated by DisA while scanning the chromosome, operates as a positive signal that advances sporulation; upon encountering a lesion, the DisA focus arrests at the damaged site and halts c-di-AMP synthesis. The chain is DNA integrity scanning protein DisA from Streptomyces coelicolor (strain ATCC BAA-471 / A3(2) / M145).